Here is a 130-residue protein sequence, read N- to C-terminus: MYRAVTRHIEVTVEPNFLPEKSSVADGRWFWSYTVVITNSGAETVQLRSRHWVITDGAGRQQEVRGEGVVGEQPVLAPGERFEYTSGVPLSTASGFMSGSYQMESASGEQFDIVVPAFSLDSPDGKRVLN.

The ApaG domain occupies 3–127 (RAVTRHIEVT…FSLDSPDGKR (125 aa)).

This is Protein ApaG from Bradyrhizobium sp. (strain ORS 278).